We begin with the raw amino-acid sequence, 120 residues long: Alpha-amylase inhibitor Haim-2 (120 aa).

The N-terminal stretch at 1–32 (MKRYVCSTFVACVMVLCVIPASGAAAHEAVAE) is a signal peptide. Disulfide bonds link Cys-43-Cys-59 and Cys-77-Cys-104.

In terms of biological role, inhibits mammalian alpha-amylases specifically but has no action on plant and microbial alpha-amylases. This Streptomyces griseosporeus protein is Alpha-amylase inhibitor Haim-2.